The chain runs to 145 residues: D-aminoacyl-tRNA deacylase (145 aa).

Positions 137–138 (GP) match the Gly-cisPro motif, important for rejection of L-amino acids motif.

The protein belongs to the DTD family. As to quaternary structure, homodimer.

Its subcellular location is the cytoplasm. The enzyme catalyses glycyl-tRNA(Ala) + H2O = tRNA(Ala) + glycine + H(+). The catalysed reaction is a D-aminoacyl-tRNA + H2O = a tRNA + a D-alpha-amino acid + H(+). Functionally, an aminoacyl-tRNA editing enzyme that deacylates mischarged D-aminoacyl-tRNAs. Also deacylates mischarged glycyl-tRNA(Ala), protecting cells against glycine mischarging by AlaRS. Acts via tRNA-based rather than protein-based catalysis; rejects L-amino acids rather than detecting D-amino acids in the active site. By recycling D-aminoacyl-tRNA to D-amino acids and free tRNA molecules, this enzyme counteracts the toxicity associated with the formation of D-aminoacyl-tRNA entities in vivo and helps enforce protein L-homochirality. This is D-aminoacyl-tRNA deacylase from Salmonella enteritidis PT4 (strain P125109).